Reading from the N-terminus, the 517-residue chain is Xaa-Pro dipeptidase (517 aa).

Mn(2+) is bound by residues D244, D255, H336, E381, and E420.

The protein belongs to the peptidase M24B family. Bacterial-type prolidase subfamily. As to quaternary structure, monomer. Mn(2+) serves as cofactor.

The enzyme catalyses Xaa-L-Pro dipeptide + H2O = an L-alpha-amino acid + L-proline. It carries out the reaction diisopropyl fluorophosphate + H2O = diisopropyl phosphate + fluoride + 2 H(+). The catalysed reaction is An aryl dialkyl phosphate + H2O = dialkyl phosphate + an aryl alcohol.. In terms of biological role, splits dipeptides with a prolyl or hydroxyprolyl residue in the C-terminal position and a nonpolar amino acid at the N-terminal position. Also catalyzes the hydrolysis of toxic organophosphorus cholinesterase-inhibiting compounds including insecticide paraoxon and nerve gases such as diisopropylfluorophosphate (DFP), O-isopropyl methylphosphonofluoridate (sarin), O-pinacolyl methylphosphonofluoridate (soman), and O-cyclohexyl methylphosphonofluoridate. The chain is Xaa-Pro dipeptidase (pepQ) from Alteromonas sp.